The following is an 81-amino-acid chain: Large ribosomal subunit protein bL31 (81 aa).

The Zn(2+) site is built by cysteine 16, cysteine 18, cysteine 38, and cysteine 41.

It belongs to the bacterial ribosomal protein bL31 family. Type A subfamily. Part of the 50S ribosomal subunit. Requires Zn(2+) as cofactor.

In terms of biological role, binds the 23S rRNA. The protein is Large ribosomal subunit protein bL31 of Mycobacterium marinum (strain ATCC BAA-535 / M).